Here is a 241-residue protein sequence, read N- to C-terminus: Beta-nerve growth factor (241 aa).

Residues 1 to 18 (MSMLFYTLITALLIGVQA) form the signal peptide. A propeptide spanning residues 19–121 (EPYTDSNLPE…SFNRTHRSKR (103 aa)) is cleaved from the precursor. Asn69, Asn114, and Asn166 each carry an N-linked (GlcNAc...) asparagine glycan. Intrachain disulfides connect Cys136/Cys201, Cys179/Cys229, and Cys189/Cys231.

The protein belongs to the NGF-beta family. Homodimer. The homodimer interacts with a single NTRK1 chain. The homodimer interacts with a single NGFR chain. The NGF dimer interacts with a single SORCS2 chain (via extracellular domain). The NGF precursor (proNGF) binds to a receptor complex formed by SORT1 and NGFR, which leads to NGF endocytosis. Both mature NGF and the immature NGF precursor (proNGF) interact with SORCS2 and with the heterodimer formed by SORCS2 and NGFR (via extracellular domains). The NGF precursor (proNGF) has much higher affinity for SORCS2 than mature NGF. The NGF precursor (proNGF) has much higher affinity for SORT1 than mature NGF. Interacts with ADAM10 in a divalent cation-dependent manner. Interacts with SORCS3.

It localises to the secreted. It is found in the endosome lumen. Functionally, nerve growth factor is important for the development and maintenance of the sympathetic and sensory nervous systems. Extracellular ligand for the NTRK1 and NGFR receptors, activates cellular signaling cascades through those receptor tyrosine kinase to regulate neuronal proliferation, differentiation and survival. Inhibits metalloproteinase dependent proteolysis of platelet glycoprotein VI. In Mastomys natalensis (African soft-furred rat), this protein is Beta-nerve growth factor (NGF).